The chain runs to 630 residues: Adagio-like protein 1 (630 aa).

Residues 1–36 (MEWDSESDGAGSIGAGEEEEEEEEEEEGGFGGGGGG) form a disordered region. Over residues 16-28 (GEEEEEEEEEEEG) the composition is skewed to acidic residues. In terms of domain architecture, PAS spans 48–127 (IEGMLRASGP…SEIRKCIDNG (80 aa)). Cys-95 is subject to S-4a-FMN cysteine. One can recognise an F-box domain in the interval 216–262 (SSLFQLTDEVLCQSILSRLSPRDIASVSSVCRRLYLLTRNEDLWRMV). Kelch repeat units follow at residues 378–428 (LLVV…TLDG), 430–481 (KLVV…VYGG), 483–535 (KILM…AGPP), and 549–601 (RVLI…VVGG).

The protein belongs to the ADAGIO family. FMN binds covalently to cysteine after exposure to blue light and is reversed in the dark.

It is found in the nucleus. Its pathway is protein modification; protein ubiquitination. Component of an E3 ubiquitin ligase complex that plays a central role in blue light-dependent circadian cycles. Acts as a blue light photoreceptor, due to the presence of FMN, that mediates light-regulated protein degradation of critical clock components by targeting them to the proteasome complex. This is Adagio-like protein 1 from Oryza sativa subsp. japonica (Rice).